A 522-amino-acid polypeptide reads, in one-letter code: Ribonuclease Y (522 aa).

A helical transmembrane segment spans residues 7–23 (SGSSAAVISGLVGFYIS). Positions 212–278 (LTNLVHLNDD…TKTLELLIQD (67 aa)) constitute a KH domain. Residues 338–431 (ALSHTLEVAH…VCAADALSAA (94 aa)) enclose the HD domain.

Belongs to the RNase Y family.

The protein localises to the cell membrane. Functionally, endoribonuclease that initiates mRNA decay. The chain is Ribonuclease Y from Sulfurimonas denitrificans (strain ATCC 33889 / DSM 1251) (Thiomicrospira denitrificans (strain ATCC 33889 / DSM 1251)).